The primary structure comprises 490 residues: MAATGVDKDRPRAMTSTTYLGLLLVGIQVLGFVAAIHAVLTVRTAQGAIAWATSLVFMPYLTLLPYLVFGRSRFDAYIEARRQANREMHLAAAELDWRPWVEEALAARQVSGYKGLKALVRMTRTPTLANNRVRLLVNGEASFEAMFKAISAARQVILVQFFIVRDDALGQRLQQLLLERAANGVEVFFLYDAIGSHALPHRYVERLRQGGVQMHGFSTGSGMLNRFQVNFRNHRKVVVVDGECGFVGGHNVGVEYLGEKPPLAPWRDTHMELRGPAVACLQESFAEDWYWATHSLPPLILPPQYDSEGALCQVVASGPADAQETCSLFFVEMINAAHERVWITSPYFVPDEAVMAALRLAVLRGVDVRLLIPSRPDHRTVYAASSLYALEAIRAGVKVFRYQPGFLHQKVVLVDRDTAAVGSANLDNRSFRLNFEVMVVTVDEGFAGEVEAMLEADFAESLEFTPEDRRSVRRLQQLGMRVARLVSPIL.

2 helical membrane passes run 20 to 40 (LGLL…HAVL) and 49 to 69 (IAWA…YLVF). PLD phosphodiesterase domains are found at residues 229 to 256 (VNFR…GVEY) and 403 to 430 (QPGF…DNRS). Catalysis depends on residues H234, K236, D241, H408, K410, and D415.

It belongs to the phospholipase D family. Cardiolipin synthase subfamily. ClsA sub-subfamily.

The protein localises to the cell inner membrane. The enzyme catalyses 2 a 1,2-diacyl-sn-glycero-3-phospho-(1'-sn-glycerol) = a cardiolipin + glycerol. In terms of biological role, catalyzes the reversible phosphatidyl group transfer from one phosphatidylglycerol molecule to another to form cardiolipin (CL) (diphosphatidylglycerol) and glycerol. The chain is Cardiolipin synthase A from Pseudomonas aeruginosa (strain LESB58).